We begin with the raw amino-acid sequence, 2450 residues long: MEQPPPLAPEPASARSRRRREPESPPAPIPLFGARTVVQRSPDEPALSKAEFVEKVRQSNQACHDGDFHTAIVLYNEALAVDPQNCILYSNRSAAYMKTQQYHKALDDAIKARLLNPKWPKAYFRQGVALQYLGRHADALAAFASGLAQDPKSLQLLVGMVEAAMKSPMRDTLEPTYQQLQKMKLDKSPFVVVSVVGQELLTAGHHGASVVVLEAALKIGTCSLKLRGSVFSALSSAHWSLGNTEKSTGYMQQDLDVAKTLGDQTGECRAHGNLGSAFFSKGNYREALTNHRHQLVLAMKLKDREAASSALSSLGHVYTAIGDYPNALASHKQCVLLAKQSKDDLSEARELGNMGAVYIAMGDFENAVQCHEQHLRIAKDLGSKREEARAYSNLGSAYHYRRNFDKAMSYHNCVLELAQELMEKPIEMRAYAGLGHAARCMQDLERAKQYHEQQLGIAEDLKDRAAEGRASSNLGIIHQMKGDYDTALKLHKTHLCIAQELSDYAAQGRAYGNMGNAYNALGMYDQAVKYHRQELQISMEVNDRASQASTHGNLAVAYQALGAHDRALQHYQNHLNIARELRDIQSEARALSNLGNFHCSRGEYVQAAPYYEQYLRLAPDLQDMEGEGKVCHNLGYAHYCLGNYQEAVKYYEQDLALAKDLHDKLSQAKAYCNLGLAFKALLNFAKAEECQKYLLSLAQSLDNSQAKFRALGNLGDIFICKKDINGAIKFYEQQLGLSHHVKDRRLEASAYAALGTAYRMVQKYDKALGYHTQELEVYQELSDLPGECRAHGHLAAVYMALGKYTMAFKCYQEQLELGRKLKEPSLEAQVYGNMGITKMNMNVMEDAIGYFEQQLAMLQQLSGNESVLDRGRAYGNLGDCYEALGDYEEAIKYYEQYLSVAQSLNRMQDQAKAYRGLGNGHRATGSLQQALVCFEKRLVVAHELGEASNKAQAYGELGSLHSQLGNYEQAISCLERQLNIARDMKDRALESDAACGLGGVYQQMGEYDTALQYHQLDLQIAEETDNPTCQGRAYGNLGLTYESLGTFERAVVYQEQHLSIAAQMNDLVAKTVSYSSLGRTHHALQNYSQAVMYLQEGLRLAEQLGRREDEAKIRHGLGLSLWASGNLEEAQHQLYRASALFETIRHEAQLSTDYKLSLFDLQTSSYQALQRVLVSLGHHDEALAVAERGRTRAFADLLVERQTGQQDSDPYSPITIDQILEMVNAQRGLVLYYSLAAGYLYSWLLAPGAGILKFHEHYLGDNSVESSSDFQAGSSAALPVATNSTLEQHIASVREALGVESYYSRACASSETESEAGDIMEQQLEEMNKQLNSVTDPTGFLRMVRHNNLLHRSCQSMTSLFSGTVSPSKDGTSSLPRRQNSLAKPPLRALYDLLIAPMEGGLMHSSGPVGRHRQLVLVLEGELYFVPFALLKGSASNEYLYERFTLIAVPAVRSLGPHSKCHLRKTPPTYSSSTTMAAVIGNPKLPSAVMDRWLWGPMPSAEEEAFMVSELLGCQPLVGSMATKERVMSALTQAECVHFATHVSWKLSALVLTPNTEGNPAGSKSSFGHPYTIPESLRVQDDASDVESISDCPPLRELLLTAADLLDLRLSVKLVVLSSSQEANGRVTADGLVALTRAFLAAGAQCVLVALWPVPVAASKMFVHAFYSSLLNGLKASASLGEAMKVVQSSKAFSHPSNWAGFTLIGSDVKLNSPSSLIGQALTEILQHPERARDALRVLLHLVEKSLQRIQNGQRNAMYTSQQSVENKVGGIPGWQALLTAVGFRLDPAASGLPAAVFFPTSDPGDRLQQCSSTLQALLGLPNPALQALCKLITASETGEQLISRAVKNMVGMLHQVLVQLQACEKEQDFASAPIPVSLSVQLWRLPGCHEFLAALGFDLCEVGQEEVILKTGKQASRRTTHFALQSLLSLFDSTELPKRLSLDSSSSLESLASAQSVSNALPLGYQHPPFSPTGADSIASDAISVYSLSSIASSMSFVSKPEGGLEGGGPRGRQDYDRSKSTHPQRATLPRRQTSPQARRGASKEEEEYEGFSIISMEPLATYQGEGKTRFSPDPKQPCVKAPGGVRLSVSSKGSVSTPNSPVKMTLIPSPNSPFQKVGKLASSDTGESDQSSTETDSTVKSQEESTPKLDPQELAQRILEETKSHLLAVERLQRSGGPAGPDREDSVVAPSSTTVFRASETSAFSKPILSHQRSQLSPLTVKPQPPARSSSLPKVSSPATSEVSGKDGLSPPGSSHPSPGRDTPVSPADPPLFRLKYPSSPYSAHISKSPRNTSPACSAPSPALSYSSAGSARSSPADAPDEKVQAVHSLKMLWQSTPQPPRGPRKTCRGAPGTLTSKRDVLSLLNLSPRHGKEEGGADRLELKELSVQRHDEVPPKVPTNGHWCTDTATLTTAGGRSTTAAPRPLRLPLANGYKFLSPGRLFPSSKC.

The residue at position 1 (M1) is an N-acetylmethionine. The tract at residues 1 to 36 is disordered; sequence MEQPPPLAPEPASARSRRRREPESPPAPIPLFGART. S24 is subject to Phosphoserine. 28 TPR repeats span residues 52-85, 87-119, 120-153, 190-223, 228-261, 268-301, 308-341, 348-381, 388-421, 428-461, 468-501, 508-541, 548-581, 588-621, 628-661, 668-701, 708-741, 748-781, 788-821, 828-861, 871-904, 911-944, 951-984, 991-1024, 1031-1064, 1071-1104, 1111-1144, and 1163-1196; these read FVEK…DPQN, ILYS…NPKW, PKAY…DPKS, FVVV…GTCS, GSVF…AKTL, CRAH…AMKL, SSAL…AKQS, AREL…AKDL, ARAY…AQEL, MRAY…AEDL, GRAS…AQEL, GRAY…SMEV, ASTH…AREL, ARAL…APDL, GKVC…AKDL, AKAY…AQSL, FRAL…SHHV, ASAY…YQEL, CRAH…GRKL, AQVY…LQQL, GRAY…AQSL, AKAY…AHEL, AQAY…ARDM, SDAA…AEET, GRAY…AAQM, TVSY…AEQL, AKIR…FETI, and TSSY…AFAD. The disordered stretch occupies residues 1362-1381; sequence SGTVSPSKDGTSSLPRRQNS. Residues S1584 and S2098 each carry the phosphoserine modification. The disordered stretch occupies residues 2001–2364; the sequence is KPEGGLEGGG…GTLTSKRDVL (364 aa). The segment covering 2090-2116 has biased composition (polar residues); the sequence is SVSSKGSVSTPNSPVKMTLIPSPNSPF. Residues 2124–2140 are compositionally biased toward low complexity; it reads SSDTGESDQSSTETDST. A compositionally biased stretch (basic and acidic residues) spans 2143–2153; that stretch reads SQEESTPKLDP. Over residues 2191-2206 the composition is skewed to polar residues; it reads APSSTTVFRASETSAF. Residue S2216 is modified to Phosphoserine. Over residues 2229 to 2245 the composition is skewed to polar residues; it reads ARSSSLPKVSSPATSEV. Composition is skewed to low complexity over residues 2252–2262 and 2296–2320; these read SPPGSSHPSPG and SPAC…SPAD. 2 positions are modified to phosphoserine: S2365 and S2370.

As to quaternary structure, interacts with AURKB. In terms of tissue distribution, expressed in embryos at all stages examined. In adult tissues, detected in heart and at low levels in kidney and testis.

The protein localises to the cytoplasm. Its subcellular location is the cytoskeleton. It localises to the microtubule organizing center. It is found in the centrosome. The protein resides in the spindle. The protein localises to the spindle pole. Its subcellular location is the midbody. Its function is as follows. During mitosis, may be involved in the condensation of spindle midzone microtubules, leading to the formation of midbody. Functionally, essential for the formation and integrity of the midbody. Max play a critical role in the progress of mitosis and cytokinesis during cell cycle. This Mus musculus (Mouse) protein is Tetratricopeptide repeat protein 28 (Ttc28).